The primary structure comprises 61 residues: DNA gyrase inhibitor YacG (61 aa).

4 residues coordinate Zn(2+): Cys-14, Cys-17, Cys-29, and Cys-33.

The protein belongs to the DNA gyrase inhibitor YacG family. In terms of assembly, interacts with GyrB. Zn(2+) serves as cofactor.

Inhibits all the catalytic activities of DNA gyrase by preventing its interaction with DNA. Acts by binding directly to the C-terminal domain of GyrB, which probably disrupts DNA binding by the gyrase. This chain is DNA gyrase inhibitor YacG, found in Zymomonas mobilis subsp. mobilis (strain ATCC 31821 / ZM4 / CP4).